The sequence spans 250 residues: NADH-quinone oxidoreductase subunit C (250 aa).

Belongs to the complex I 30 kDa subunit family. NDH-1 is composed of 14 different subunits. Subunits NuoB, C, D, E, F, and G constitute the peripheral sector of the complex.

It is found in the cell inner membrane. It catalyses the reaction a quinone + NADH + 5 H(+)(in) = a quinol + NAD(+) + 4 H(+)(out). NDH-1 shuttles electrons from NADH, via FMN and iron-sulfur (Fe-S) centers, to quinones in the respiratory chain. The immediate electron acceptor for the enzyme in this species is believed to be ubiquinone. Couples the redox reaction to proton translocation (for every two electrons transferred, four hydrogen ions are translocated across the cytoplasmic membrane), and thus conserves the redox energy in a proton gradient. The protein is NADH-quinone oxidoreductase subunit C of Xylella fastidiosa (strain 9a5c).